A 537-amino-acid chain; its full sequence is Beta-arabinofuranosyltransferase RAY1 (537 aa).

Residues 370 to 372 (DVD) carry the DXD motif motif.

The protein belongs to the glycosyltransferase 77 family.

Its function is as follows. Beta-arabinofuranosyltransferase that transfers specifically an arabinosyl residue from UDP-arabinofuranose to the monosaccharide galactose or beta-methyl-galactoside in vitro. Catalyzes the addition of a beta-arabinofuranose residue onto a beta-galactosyl residue of an Yariv-precipitable wall polymer in vivo. This is Beta-arabinofuranosyltransferase RAY1 from Arabidopsis thaliana (Mouse-ear cress).